Consider the following 267-residue polypeptide: Cell division protein FtsQ (267 aa).

The Cytoplasmic portion of the chain corresponds to 1 to 32 (MRKKTSSNKKKQTKKTNNISLRRKLGLMYKKA). The chain crosses the membrane as a helical span at residues 33–53 (ILGLKIALIIFVCLFVFTKYF). Residues 54-267 (AGIKTYLTTN…DKNKYYIEKY (214 aa)) lie on the Periplasmic side of the membrane. A POTRA domain is found at 73 to 141 (FKLENVIIEG…NTVYIKLFER (69 aa)).

Belongs to the FtsQ/DivIB family. FtsQ subfamily.

Its subcellular location is the cell inner membrane. In terms of biological role, essential cell division protein. In Rickettsia conorii (strain ATCC VR-613 / Malish 7), this protein is Cell division protein FtsQ.